A 238-amino-acid chain; its full sequence is tRNA (guanine-N(1)-)-methyltransferase (238 aa).

S-adenosyl-L-methionine is bound by residues Gly110 and 129 to 134 (LGDFIL).

This sequence belongs to the RNA methyltransferase TrmD family. In terms of assembly, homodimer.

Its subcellular location is the cytoplasm. The enzyme catalyses guanosine(37) in tRNA + S-adenosyl-L-methionine = N(1)-methylguanosine(37) in tRNA + S-adenosyl-L-homocysteine + H(+). Specifically methylates guanosine-37 in various tRNAs. This Clostridium botulinum (strain Alaska E43 / Type E3) protein is tRNA (guanine-N(1)-)-methyltransferase.